We begin with the raw amino-acid sequence, 408 residues long: Solute carrier family 35 member F1 (408 aa).

A disordered region spans residues 1–21; the sequence is MIPPEQPQQQLQPPSPAPPNH. The next 10 membrane-spanning stretches (helical) occupy residues 60 to 80, 94 to 114, 129 to 147, 158 to 178, 186 to 206, 221 to 241, 247 to 267, 284 to 304, 311 to 331, and 335 to 355; these read MLIS…IGLT, VFQS…TLAV, WWKY…YLVV, IQLL…FFLL, FIGI…DVLV, LLVL…EYII, VEFL…QLAI, LLYV…PVVI, SVNL…LFLF, and FSGL…LYSS.

This sequence belongs to the SLC35F solute transporter family.

The protein resides in the cytoplasmic vesicle. The protein localises to the secretory vesicle. It localises to the synaptic vesicle membrane. Functionally, putative solute transporter. This Homo sapiens (Human) protein is Solute carrier family 35 member F1 (SLC35F1).